A 166-amino-acid polypeptide reads, in one-letter code: Xanthine-guanine phosphoribosyltransferase (166 aa).

5-phospho-alpha-D-ribose 1-diphosphate contacts are provided by residues 42 to 43 (RG) and 99 to 107 (DDLTDTGKT). Asp-100 serves as a coordination point for Mg(2+). The guanine site is built by Asp-103 and Ile-146. The xanthine site is built by Asp-103 and Ile-146. Residues 103–107 (DTGKT) and 145–146 (WI) contribute to the GMP site.

This sequence belongs to the purine/pyrimidine phosphoribosyltransferase family. XGPT subfamily. Homotetramer. The cofactor is Mg(2+).

The protein localises to the cell inner membrane. The enzyme catalyses GMP + diphosphate = guanine + 5-phospho-alpha-D-ribose 1-diphosphate. It carries out the reaction XMP + diphosphate = xanthine + 5-phospho-alpha-D-ribose 1-diphosphate. It catalyses the reaction IMP + diphosphate = hypoxanthine + 5-phospho-alpha-D-ribose 1-diphosphate. Its pathway is purine metabolism; GMP biosynthesis via salvage pathway; GMP from guanine: step 1/1. The protein operates within purine metabolism; XMP biosynthesis via salvage pathway; XMP from xanthine: step 1/1. Purine salvage pathway enzyme that catalyzes the transfer of the ribosyl-5-phosphate group from 5-phospho-alpha-D-ribose 1-diphosphate (PRPP) to the N9 position of the 6-oxopurines guanine and xanthine to form the corresponding ribonucleotides GMP (guanosine 5'-monophosphate) and XMP (xanthosine 5'-monophosphate), with the release of PPi. To a lesser extent, also acts on hypoxanthine. This is Xanthine-guanine phosphoribosyltransferase from Mesorhizobium japonicum (strain LMG 29417 / CECT 9101 / MAFF 303099) (Mesorhizobium loti (strain MAFF 303099)).